The chain runs to 158 residues: Transcriptional repressor NrdR (158 aa).

Residues methionine 1–asparagine 22 are disordered. A zinc finger spans residues cysteine 3–cysteine 34. Basic and acidic residues predominate over residues threonine 11–asparagine 22. In terms of domain architecture, ATP-cone spans leucine 49–aspartate 139.

This sequence belongs to the NrdR family. Zn(2+) serves as cofactor.

Negatively regulates transcription of bacterial ribonucleotide reductase nrd genes and operons by binding to NrdR-boxes. The protein is Transcriptional repressor NrdR of Rhizobium rhizogenes (strain K84 / ATCC BAA-868) (Agrobacterium radiobacter).